The following is a 277-amino-acid chain: PTS system sorbose-specific EIIC component (277 aa).

5 consecutive transmembrane segments (helical) span residues 1–21 (MAIS…VGMG), 92–112 (IQKG…LTVL), 133–153 (FTAI…RVSI), 177–197 (VITG…YAMI), and 219–239 (YLKL…IVYV). Residues 3–237 (ISTIQIILIF…GAVGLIFAIV (235 aa)) form the PTS EIIC type-4 domain.

It is found in the cell membrane. Functionally, the phosphoenolpyruvate-dependent sugar phosphotransferase system (PTS), a major carbohydrate active transport system, catalyzes the phosphorylation of incoming sugar substrates concomitant with their translocation across the cell membrane. The enzyme II SorABCD PTS system is involved in L-sorbose transport. The protein is PTS system sorbose-specific EIIC component of Lacticaseibacillus casei (Lactobacillus casei).